The primary structure comprises 34 residues: Brevinin-2GHa (34 aa).

Cys-27 and Cys-33 form a disulfide bridge.

As to expression, expressed by the skin glands.

The protein localises to the secreted. Antimicrobial peptide. Active against the Gram-positive bacteria S.aureus FDA209P (MIC=14.9 ug/ml) and B.subtilis ATCC 6633 (MIC&gt;64 ug/ml), but not active against the Gram-negative bacterium E.coli or the fungus C.albicans. The chain is Brevinin-2GHa from Sylvirana guentheri (Gunther's frog).